Reading from the N-terminus, the 544-residue chain is CTP synthase (544 aa).

The tract at residues 1–265 (MTKFIFVTGG…DDIICEHLDL (265 aa)) is amidoligase domain. Serine 13 is a CTP binding site. Serine 13 provides a ligand contact to UTP. ATP contacts are provided by residues 14–19 (SLGKGI) and aspartate 71. Mg(2+)-binding residues include aspartate 71 and glutamate 139. CTP contacts are provided by residues 146–148 (DIE), 186–191 (KTKPTQ), and lysine 222. UTP is bound by residues 186 to 191 (KTKPTQ) and lysine 222. Residues 290 to 542 (NIAMVGKYVD…VEAALAYQAD (253 aa)) enclose the Glutamine amidotransferase type-1 domain. Glycine 351 serves as a coordination point for L-glutamine. The Nucleophile; for glutamine hydrolysis role is filled by cysteine 378. L-glutamine-binding positions include 379 to 382 (LGMQ), glutamate 402, and arginine 469. Active-site residues include histidine 515 and glutamate 517.

The protein belongs to the CTP synthase family. Homotetramer.

The enzyme catalyses UTP + L-glutamine + ATP + H2O = CTP + L-glutamate + ADP + phosphate + 2 H(+). The catalysed reaction is L-glutamine + H2O = L-glutamate + NH4(+). It carries out the reaction UTP + NH4(+) + ATP = CTP + ADP + phosphate + 2 H(+). Its pathway is pyrimidine metabolism; CTP biosynthesis via de novo pathway; CTP from UDP: step 2/2. Allosterically activated by GTP, when glutamine is the substrate; GTP has no effect on the reaction when ammonia is the substrate. The allosteric effector GTP functions by stabilizing the protein conformation that binds the tetrahedral intermediate(s) formed during glutamine hydrolysis. Inhibited by the product CTP, via allosteric rather than competitive inhibition. Catalyzes the ATP-dependent amination of UTP to CTP with either L-glutamine or ammonia as the source of nitrogen. Regulates intracellular CTP levels through interactions with the four ribonucleotide triphosphates. The chain is CTP synthase from Laribacter hongkongensis (strain HLHK9).